A 420-amino-acid chain; its full sequence is Fasciclin-like arabinogalactan protein 8 (420 aa).

The first 25 residues, 1–25, serve as a signal peptide directing secretion; it reads MAASQTFSLLAFTFSLLAFASTVSS. FAS1 domains follow at residues 26–172 and 186–326; these read HNIT…DAPI and SLSN…DNVL. Residues Asn27, Asn128, Asn162, Asn189, and Asn273 are each glycosylated (N-linked (GlcNAc...) asparagine). Residues 335 to 394 are disordered; that stretch reads SKSPSPAPAPEPVTAPTPSPADAPSPTAASPPAPPTDESPESAPSDSPTGSANSKSANAA. A compositionally biased stretch (pro residues) spans 339–371; the sequence is SPAPAPEPVTAPTPSPADAPSPTAASPPAPPTD. Asn392 is lipidated: GPI-anchor amidated asparagine. The propeptide at 393–420 is removed in mature form; it reads AAVGVSTPSLFTALVTIAAIAVSVSLCS.

Belongs to the fasciclin-like AGP family. Expressed mainly in flowers and to a lesser extent in leaves and roots.

It localises to the cell membrane. May be a cell surface adhesion protein. The protein is Fasciclin-like arabinogalactan protein 8 (FLA8) of Arabidopsis thaliana (Mouse-ear cress).